We begin with the raw amino-acid sequence, 96 residues long: Co-chaperonin GroES (96 aa).

The protein belongs to the GroES chaperonin family. Heptamer of 7 subunits arranged in a ring. Interacts with the chaperonin GroEL.

It localises to the cytoplasm. Its function is as follows. Together with the chaperonin GroEL, plays an essential role in assisting protein folding. The GroEL-GroES system forms a nano-cage that allows encapsulation of the non-native substrate proteins and provides a physical environment optimized to promote and accelerate protein folding. GroES binds to the apical surface of the GroEL ring, thereby capping the opening of the GroEL channel. This chain is Co-chaperonin GroES, found in Photobacterium profundum (strain SS9).